A 319-amino-acid chain; its full sequence is Protein StrN (319 aa).

Its pathway is antibiotic biosynthesis; streptomycin biosynthesis. This Streptomyces griseus protein is Protein StrN (strN).